We begin with the raw amino-acid sequence, 554 residues long: DNA mismatch repair protein MutL (554 aa).

It belongs to the DNA mismatch repair MutL/HexB family.

Its function is as follows. This protein is involved in the repair of mismatches in DNA. It is required for dam-dependent methyl-directed DNA mismatch repair. May act as a 'molecular matchmaker', a protein that promotes the formation of a stable complex between two or more DNA-binding proteins in an ATP-dependent manner without itself being part of a final effector complex. This Crocosphaera subtropica (strain ATCC 51142 / BH68) (Cyanothece sp. (strain ATCC 51142)) protein is DNA mismatch repair protein MutL.